We begin with the raw amino-acid sequence, 131 residues long: Large-conductance mechanosensitive channel (131 aa).

Helical transmembrane passes span 14–34 (VIDLAVGVIIGGAFGKIVTSL) and 67–87 (GSFIQTVIDFLIISFSIFIFI).

The protein belongs to the MscL family. As to quaternary structure, homopentamer.

It localises to the cell membrane. Its function is as follows. Channel that opens in response to stretch forces in the membrane lipid bilayer. May participate in the regulation of osmotic pressure changes within the cell. This Bacillus pumilus (strain SAFR-032) protein is Large-conductance mechanosensitive channel.